Consider the following 432-residue polypeptide: ATP-dependent RNA helicase SUB2 (432 aa).

The span at 1–17 (MSAEGQEELLDYSDSEE) shows a compositional bias: acidic residues. The tract at residues 1-35 (MSAEGQEELLDYSDSEEIAVPSNAPEAGADGADKD) is disordered. Positions 48 to 76 (TGFRDFLLKPELLRAIGDCGFEHPSEVQQ) match the Q motif motif. The Helicase ATP-binding domain occupies 79-254 (IPQSILGTDV…KKFMQNPLEI (176 aa)). 92–99 (AKSGLGKT) contributes to the ATP binding site. The short motif at 201-204 (DECD) is the DEAD box element. In terms of domain architecture, Helicase C-terminal spans 266–427 (GLQQYYLKLD…EFPEEGVDSS (162 aa)).

The protein belongs to the DEAD box helicase family. DECD subfamily.

Its subcellular location is the nucleus. It catalyses the reaction ATP + H2O = ADP + phosphate + H(+). ATP-binding RNA helicase involved in transcription elongation and required for the export of mRNA out of the nucleus. SUB2 also plays a role in pre-mRNA splicing and spliceosome assembly. May be involved in rDNA and telomeric silencing, and maintenance of genome integrity. The protein is ATP-dependent RNA helicase SUB2 (SUB2) of Meyerozyma guilliermondii (strain ATCC 6260 / CBS 566 / DSM 6381 / JCM 1539 / NBRC 10279 / NRRL Y-324) (Yeast).